The following is a 129-amino-acid chain: Small ribosomal subunit protein uS11 (129 aa).

This sequence belongs to the universal ribosomal protein uS11 family. In terms of assembly, part of the 30S ribosomal subunit. Interacts with proteins S7 and S18. Binds to IF-3.

Functionally, located on the platform of the 30S subunit, it bridges several disparate RNA helices of the 16S rRNA. Forms part of the Shine-Dalgarno cleft in the 70S ribosome. The chain is Small ribosomal subunit protein uS11 from Pectobacterium atrosepticum (strain SCRI 1043 / ATCC BAA-672) (Erwinia carotovora subsp. atroseptica).